Here is a 319-residue protein sequence, read N- to C-terminus: Cell surface A33 antigen (319 aa).

Residues 1-21 form the signal peptide; the sequence is MLGKAGSVVWMLCAIWVAADA. The region spanning 22–134 is the Ig-like V-type domain; the sequence is LTVETTQDIL…QDVNAKSRVR (113 aa). Over 22 to 235 the chain is Extracellular; the sequence is LTVETTQDIL…VAPRPPSMNI (214 aa). Disulfide bonds link C43-C117, C146-C222, and C162-C211. N99, N112, N200, and N223 each carry an N-linked (GlcNAc...) asparagine glycan. An Ig-like C2-type domain is found at 140-227; it reads PPSKPDCSIQ…GIESCNITVA (88 aa). The chain crosses the membrane as a helical span at residues 236–256; that stretch reads ALYAGIAGGVFVALIIIGVIV. The Cytoplasmic portion of the chain corresponds to 257-319; that stretch reads YCCCCREKDD…GRSTPDQPFQ (63 aa). Basic and acidic residues-rich tracts occupy residues 267–276 and 284–308; these read KDQDREDARP and PKKE…DRWS. The interval 267–319 is disordered; sequence KDQDREDARPNRAAYQVPKKEQKEISRGREDEDDHRHEDRWSSGRSTPDQPFQ. A compositionally biased stretch (polar residues) spans 309 to 319; the sequence is SGRSTPDQPFQ.

In terms of processing, palmitoylated.

The protein resides in the membrane. In terms of biological role, may play a role in cell-cell recognition and signaling. The polypeptide is Cell surface A33 antigen (Gpa33) (Mus musculus (Mouse)).